Reading from the N-terminus, the 223-residue chain is tRNA (guanine-N(7)-)-methyltransferase (223 aa).

The S-adenosyl-L-methionine site is built by glutamate 45, glutamate 70, and aspartate 125. Residue aspartate 125 is part of the active site. Substrate-binding positions include lysine 129, aspartate 161, and 201–204 (TEYE).

Belongs to the class I-like SAM-binding methyltransferase superfamily. TrmB family.

The catalysed reaction is guanosine(46) in tRNA + S-adenosyl-L-methionine = N(7)-methylguanosine(46) in tRNA + S-adenosyl-L-homocysteine. The protein operates within tRNA modification; N(7)-methylguanine-tRNA biosynthesis. Functionally, catalyzes the formation of N(7)-methylguanine at position 46 (m7G46) in tRNA. The polypeptide is tRNA (guanine-N(7)-)-methyltransferase (Mesoplasma florum (strain ATCC 33453 / NBRC 100688 / NCTC 11704 / L1) (Acholeplasma florum)).